We begin with the raw amino-acid sequence, 229 residues long: Platelet-activating factor acetylhydrolase IB subunit alpha2 (229 aa).

Ser-2 bears the N-acetylserine mark. Ser-2 carries the phosphoserine modification. Ser-48 is a catalytic residue. Ser-64 bears the Phosphoserine mark. Active-site residues include Asp-193 and His-196. Residue Thr-220 is modified to Phosphothreonine.

The protein belongs to the 'GDSL' lipolytic enzyme family. Platelet-activating factor acetylhydrolase IB beta/gamma subunits subfamily. Forms a catalytic dimer which is either homodimer (alpha2/alpha2 homodimer) or heterodimer with PAFAH1B3 (alpha2/alpha1 heterodimer). Component of the cytosolic (PAF-AH (I)) heterotetrameric enzyme, which is composed of PAFAH1B1 (beta), PAFAH1B2 (alpha2) and PAFAH1B3 (alpha1) subunits. The catalytic activity of the enzyme resides in the alpha1 (PAFAH1B3) and alpha2 (PAFAH1B2) subunits, whereas the beta subunit (PAFAH1B1) has regulatory activity. Trimer formation is not essential for the catalytic activity. Interacts (homodimer form) with PAFAH1B1 (homodimer form); PAFAH1B2 competes with NDEL1 for PAFAH1B1 binding. Interacts with VLDLR; this interaction may modulate the Reelin pathway.

It localises to the cytoplasm. It catalyses the reaction a 1-O-alkyl-2-acetyl-sn-glycero-3-phosphocholine + H2O = a 1-O-alkyl-sn-glycero-3-phosphocholine + acetate + H(+). The catalysed reaction is 1-O-hexadecyl-2-acetyl-sn-glycero-3-phosphocholine + H2O = 1-O-hexadecyl-sn-glycero-3-phosphocholine + acetate + H(+). It carries out the reaction 1-O-hexadecyl-2-acetyl-sn-glycero-3-phosphate + H2O = 1-O-hexadecyl-sn-glycero-3-phosphate + acetate + H(+). The enzyme catalyses 1-O-hexadecyl-2-acetyl-sn-glycero-3-phosphoethanolamine + H2O = 1-O-hexadecyl-sn-glycero-3-phosphoethanolamine + acetate + H(+). With respect to regulation, beta subunit (PAFAH1B1) stimulates the acetylhydrolase activity of the alpha2/alpha2 catalytic homodimer. Alpha2 catalytic subunit of the cytosolic type I platelet-activating factor (PAF) acetylhydrolase (PAF-AH (I)) heterotetrameric enzyme that catalyzes the hydrolyze of the acetyl group at the sn-2 position of PAF and its analogs and modulates the action of PAF. The activity and substrate specificity of PAF-AH (I) are affected by its subunit composition. The alpha2/alpha2 homodimer (PAFAH1B2/PAFAH1B2 homodimer) hydrolyzes PAF and 1-O-alkyl-2-acetyl-sn-glycero-3-phosphorylethanolamine (AAGPE) more efficiently than 1-O-alkyl-2-acetyl-sn-glycero-3-phosphoric acid (AAGPA). In contrast, the alpha1/alpha2 heterodimer(PAFAH1B3/PAFAH1B3 heterodimer) hydrolyzes AAGPA more efficiently than PAF, but has little hydrolytic activity towards AAGPE. May play a role in male germ cell meiosis during the late pachytenestage and meiotic divisions as well as early spermiogenesis. The protein is Platelet-activating factor acetylhydrolase IB subunit alpha2 of Mus musculus (Mouse).